The primary structure comprises 376 residues: Queuine tRNA-ribosyltransferase (376 aa).

The active-site Proton acceptor is Asp-89. Substrate-binding positions include 89 to 93 (DSGGF), Asp-143, Gln-194, and Gly-221. An RNA binding region spans residues 252–258 (GVGIPSN). Asp-271 acts as the Nucleophile in catalysis. The interval 276–280 (ARNGR) is RNA binding; important for wobble base 34 recognition. Residues Cys-309, Cys-311, Cys-314, and His-340 each contribute to the Zn(2+) site.

Belongs to the queuine tRNA-ribosyltransferase family. Homodimer. Within each dimer, one monomer is responsible for RNA recognition and catalysis, while the other monomer binds to the replacement base PreQ1. The cofactor is Zn(2+).

It catalyses the reaction 7-aminomethyl-7-carbaguanine + guanosine(34) in tRNA = 7-aminomethyl-7-carbaguanosine(34) in tRNA + guanine. The protein operates within tRNA modification; tRNA-queuosine biosynthesis. Its function is as follows. Catalyzes the base-exchange of a guanine (G) residue with the queuine precursor 7-aminomethyl-7-deazaguanine (PreQ1) at position 34 (anticodon wobble position) in tRNAs with GU(N) anticodons (tRNA-Asp, -Asn, -His and -Tyr). Catalysis occurs through a double-displacement mechanism. The nucleophile active site attacks the C1' of nucleotide 34 to detach the guanine base from the RNA, forming a covalent enzyme-RNA intermediate. The proton acceptor active site deprotonates the incoming PreQ1, allowing a nucleophilic attack on the C1' of the ribose to form the product. After dissociation, two additional enzymatic reactions on the tRNA convert PreQ1 to queuine (Q), resulting in the hypermodified nucleoside queuosine (7-(((4,5-cis-dihydroxy-2-cyclopenten-1-yl)amino)methyl)-7-deazaguanosine). In Clostridium botulinum (strain Kyoto / Type A2), this protein is Queuine tRNA-ribosyltransferase.